The sequence spans 361 residues: Histidinol-phosphate aminotransferase (361 aa).

N6-(pyridoxal phosphate)lysine is present on Lys-219.

It belongs to the class-II pyridoxal-phosphate-dependent aminotransferase family. Histidinol-phosphate aminotransferase subfamily. As to quaternary structure, homodimer. Pyridoxal 5'-phosphate serves as cofactor.

It catalyses the reaction L-histidinol phosphate + 2-oxoglutarate = 3-(imidazol-4-yl)-2-oxopropyl phosphate + L-glutamate. The protein operates within amino-acid biosynthesis; L-histidine biosynthesis; L-histidine from 5-phospho-alpha-D-ribose 1-diphosphate: step 7/9. The protein is Histidinol-phosphate aminotransferase of Acinetobacter baumannii (strain AB307-0294).